A 579-amino-acid polypeptide reads, in one-letter code: Arginine--tRNA ligase (579 aa).

The 'HIGH' region signature appears at 127-137; that stretch reads PNLAKEMHVGH.

Belongs to the class-I aminoacyl-tRNA synthetase family. As to quaternary structure, monomer.

It localises to the cytoplasm. The catalysed reaction is tRNA(Arg) + L-arginine + ATP = L-arginyl-tRNA(Arg) + AMP + diphosphate. The chain is Arginine--tRNA ligase from Azotobacter vinelandii (strain DJ / ATCC BAA-1303).